The sequence spans 928 residues: TBC1 domain family member 2A (928 aa).

At M1 the chain carries N-acetylmethionine. The segment covering 1–19 (MEGAGENAPESSSSAPGSE) has biased composition (low complexity). A disordered region spans residues 1–39 (MEGAGENAPESSSSAPGSEESARDPQVPPPEEESGDCAR). Positions 1 to 169 (MEGAGENAPE…AGNGPVLHLE (169 aa)) are interaction with CADH1. The PH domain maps to 45-142 (PKKLCGYLSK…WLQQLQMKRW (98 aa)). A disordered region spans residues 225–275 (NKQAQGTGHEPPGEDSPQSGEPQREEQPLASDASTPGREPEDSPKPAPKPS). The tract at residues 295-433 (SEGITRNRTA…KVTQDFTHPP (139 aa)) is interaction with RAC1. Positions 298–416 (ITRNRTAQEK…LMDKNHAKQQ (119 aa)) form a coiled coil. Position 436 is a phosphoserine (S436). In terms of domain architecture, Rab-GAP TBC spans 625-817 (GVPREHRPRV…RVWDAFLYEG (193 aa)). Residues 875-913 (MKQLRQLRMVHRERLEAELRELEQLKAEYLERRASRRRA) are a coiled coil. A phosphoserine mark is found at S915 and S920.

Interacts with activated RAC1 and CDH1. Expressed in a broad range of tissues, especially in kidney, liver, lung and placenta. Also expressed in keratinocytes and epithelia-containing organs. Isoform 2 is differentially expressed in prostate normal and cancer cells (at protein level).

It localises to the cytoplasm. The protein resides in the cytoplasmic vesicle. The protein localises to the cell junction. Acts as a GTPase-activating protein for RAB7A. Signal effector acting as a linker between RAC1 and RAB7A, leading to RAB7A inactivation and subsequent inhibition of cadherin degradation and reduced cell-cell adhesion. This Homo sapiens (Human) protein is TBC1 domain family member 2A (TBC1D2).